A 301-amino-acid polypeptide reads, in one-letter code: Protein ARMCX6 (301 aa).

A mitochondrion outer membrane (MOM)-targeting sequence region spans residues 1–6 (MGRARE). Topologically, residues 1 to 7 (MGRAREM) are mitochondrial intermembrane. Residues 8–25 (GWMAAGLMIGAGACYCMY) traverse the membrane as a helical; Signal-anchor segment. Positions 26 to 36 (KLTMGRSEGNE) are mitochondrion outer membrane (MOM)-targeting sequence. Over 26–301 (KLTMGRSEGN…REMLVEAISP (276 aa)) the chain is Cytoplasmic. Positions 69–101 (WSEDGDWDEPGAPGGTEDRRSGGGKANRAHPIK) are disordered.

The protein belongs to the eutherian X-chromosome-specific Armcx family. Highly expressed in the developing neural tissues, neural crest derivatives and hind limbs. Also widely expressed in the adult nervous tissue, especially in the forebrain, including the cerebral cortex, hippocampus and thalamus.

Its subcellular location is the mitochondrion. The protein localises to the mitochondrion outer membrane. In terms of biological role, may regulate the dynamics and distribution of mitochondria in neural cells. The sequence is that of Protein ARMCX6 (Armcx6) from Mus musculus (Mouse).